We begin with the raw amino-acid sequence, 377 residues long: tRNA/tmRNA (uracil-C(5))-methyltransferase (377 aa).

Residues glutamine 199, tyrosine 227, asparagine 232, glutamate 248, and aspartate 308 each coordinate S-adenosyl-L-methionine. Cysteine 333 (nucleophile) is an active-site residue. Glutamate 367 acts as the Proton acceptor in catalysis.

The protein belongs to the class I-like SAM-binding methyltransferase superfamily. RNA M5U methyltransferase family. TrmA subfamily.

The catalysed reaction is uridine(54) in tRNA + S-adenosyl-L-methionine = 5-methyluridine(54) in tRNA + S-adenosyl-L-homocysteine + H(+). It catalyses the reaction uridine(341) in tmRNA + S-adenosyl-L-methionine = 5-methyluridine(341) in tmRNA + S-adenosyl-L-homocysteine + H(+). Dual-specificity methyltransferase that catalyzes the formation of 5-methyluridine at position 54 (m5U54) in all tRNAs, and that of position 341 (m5U341) in tmRNA (transfer-mRNA). The protein is tRNA/tmRNA (uracil-C(5))-methyltransferase of Aeromonas salmonicida (strain A449).